Consider the following 756-residue polypeptide: MTTSVALDWVVQDGQRLAECRHDHPFSLLGPQSHEGQWIVRIWMPEASQVELLCDGRTTAMTTPNHSWIFEAALNQDPGRTYQLRVKRAGIVHEQHDPWAFHDEWMGEMDRHLFAEGNHHHIWQRMGAHLMEREGVEGVMFCLWAPRACSVAVLGELNGWDGRHHPMQRRQGGLWELFIPGFKEGTLYKYEIRTQDGHCYQKADPYGFQHEVRPATSSVVARLDRYQWQDEQWMRQRDSRNALDQPISVYEMHLGSWIHAATDEPYIELDGTPRAPVLAADMKPGARLLTYPELADQLIPYVKDRGFTHIELMPISEHPFDGSWGYQVTGWYAPTSRFGSPDEFRAFVDRCHAEGLGVIIDWVPGHFPKDGHGLAFFDGTHLYEHSDPRIGEHKEWGTLIFNYSRNEVRNFLVANLVYWFEQFHIDGIRVDAVASMLYRDYLRPDGEWIANEDGGRENTEAVRFLQQANHVLFQHFPGALSIAEESTTWPMVTQPTDMGGLGFNLKWNMGWMHDMLDYFELDPWFRQFHQNNITFSIWYTYTENFMLALSHDEVVHGKSNLLHKMPGDDWQKCANVRALLAYMWTHPGKKTIFMGMEFGQRSEWNVWGDLQWELLTHDPHKGLQKLVDDLNTFYKAEPALWKDDFDQYGFQWIDCNDNRHSIISFMRRESSGGTWLVVVANFTPQSHSNYRIGVPIGGYYEEVFNTDSSCYGGRNLGNMGGKNTDEFNIHGYEQSLELCLPALSVLVFRHDPKRSL.

The Nucleophile role is filled by D431. The active-site Proton donor is E484.

It belongs to the glycosyl hydrolase 13 family. GlgB subfamily. In terms of assembly, monomer.

It catalyses the reaction Transfers a segment of a (1-&gt;4)-alpha-D-glucan chain to a primary hydroxy group in a similar glucan chain.. It participates in glycan biosynthesis; glycogen biosynthesis. Functionally, catalyzes the formation of the alpha-1,6-glucosidic linkages in glycogen by scission of a 1,4-alpha-linked oligosaccharide from growing alpha-1,4-glucan chains and the subsequent attachment of the oligosaccharide to the alpha-1,6 position. This is 1,4-alpha-glucan branching enzyme GlgB from Prochlorococcus marinus (strain MIT 9303).